The sequence spans 52 residues: MDLFDECLEALGKNKEILSEELTAKYYELLSNSFPLHLGDESSGKKFVVINL.

This is an uncharacterized protein from Bacillus subtilis (strain 168).